A 483-amino-acid chain; its full sequence is Glutamyl-tRNA(Gln) amidotransferase subunit A (483 aa).

Residues Lys75 and Ser150 each act as charge relay system in the active site. Ser174 serves as the catalytic Acyl-ester intermediate.

It belongs to the amidase family. GatA subfamily. In terms of assembly, heterotrimer of A, B and C subunits.

The catalysed reaction is L-glutamyl-tRNA(Gln) + L-glutamine + ATP + H2O = L-glutaminyl-tRNA(Gln) + L-glutamate + ADP + phosphate + H(+). Functionally, allows the formation of correctly charged Gln-tRNA(Gln) through the transamidation of misacylated Glu-tRNA(Gln) in organisms which lack glutaminyl-tRNA synthetase. The reaction takes place in the presence of glutamine and ATP through an activated gamma-phospho-Glu-tRNA(Gln). This Gloeothece citriformis (strain PCC 7424) (Cyanothece sp. (strain PCC 7424)) protein is Glutamyl-tRNA(Gln) amidotransferase subunit A.